The chain runs to 369 residues: 2-aminoethylphosphonate--pyruvate transaminase (369 aa).

Lys-193 is modified (N6-(pyridoxal phosphate)lysine).

Belongs to the class-V pyridoxal-phosphate-dependent aminotransferase family. PhnW subfamily. Homodimer. It depends on pyridoxal 5'-phosphate as a cofactor.

It catalyses the reaction (2-aminoethyl)phosphonate + pyruvate = phosphonoacetaldehyde + L-alanine. In terms of biological role, involved in phosphonate degradation. This chain is 2-aminoethylphosphonate--pyruvate transaminase, found in Burkholderia thailandensis (strain ATCC 700388 / DSM 13276 / CCUG 48851 / CIP 106301 / E264).